A 350-amino-acid chain; its full sequence is Protein-glutamate methylesterase/protein-glutamine glutaminase (350 aa).

The 118-residue stretch at R5–M122 folds into the Response regulatory domain. D56 carries the post-translational modification 4-aspartylphosphate. The CheB-type methylesterase domain maps to L152–M338. Active-site residues include S164, H190, and D286.

It belongs to the CheB family. Post-translationally, phosphorylated by CheA. Phosphorylation of the N-terminal regulatory domain activates the methylesterase activity.

It localises to the cytoplasm. The enzyme catalyses [protein]-L-glutamate 5-O-methyl ester + H2O = L-glutamyl-[protein] + methanol + H(+). It carries out the reaction L-glutaminyl-[protein] + H2O = L-glutamyl-[protein] + NH4(+). Functionally, involved in chemotaxis. Part of a chemotaxis signal transduction system that modulates chemotaxis in response to various stimuli. Catalyzes the demethylation of specific methylglutamate residues introduced into the chemoreceptors (methyl-accepting chemotaxis proteins or MCP) by CheR. Also mediates the irreversible deamidation of specific glutamine residues to glutamic acid. The protein is Protein-glutamate methylesterase/protein-glutamine glutaminase of Enterobacter cloacae.